Here is a 516-residue protein sequence, read N- to C-terminus: Katanin p60 ATPase-containing subunit A1 (516 aa).

The disordered stretch occupies residues 75 to 212 (GFKSEPAAPE…DEKKFDPAGY (138 aa)). 2 stretches are compositionally biased toward basic and acidic residues: residues 133–143 (ARKDPPRRSEP) and 155–167 (RGGRGPSDRRGDA). Residues 168–178 (RSGGGGRGGAR) are compositionally biased toward gly residues. The segment covering 179–212 (GSDKDKNRGGKSDKDKKAPSGEEGDEKKFDPAGY) has biased composition (basic and acidic residues). 274-281 (GPPGTGKT) is a binding site for ATP.

It belongs to the AAA ATPase family. Katanin p60 subunit A1 subfamily. In terms of assembly, can homooligomerize into hexameric rings, which may be promoted by interaction with microtubules. Interacts with KATNB1, which may serve as a targeting subunit.

It localises to the cytoplasm. The protein localises to the cytoskeleton. Its subcellular location is the microtubule organizing center. It is found in the centrosome. The protein resides in the spindle pole. The catalysed reaction is n ATP + n H2O + a microtubule = n ADP + n phosphate + (n+1) alpha/beta tubulin heterodimers.. ATPase activity is stimulated by microtubules, which promote homooligomerization. ATP-dependent microtubule severing is stimulated by interaction with KATNB1. Its function is as follows. Catalytic subunit of a complex which severs microtubules in an ATP-dependent manner. Microtubule severing may promote rapid reorganization of cellular microtubule arrays and the release of microtubules from the centrosome following nucleation. In mitotic spindles this could allow depolymerization of the microtubule end proximal to the centrosome, and subsequent poleward microtubule flux. This Strongylocentrotus purpuratus (Purple sea urchin) protein is Katanin p60 ATPase-containing subunit A1.